Consider the following 380-residue polypeptide: Queuine tRNA-ribosyltransferase (380 aa).

Catalysis depends on aspartate 96, which acts as the Proton acceptor. Residues 96 to 100, aspartate 150, glutamine 193, and glycine 220 each bind substrate; that span reads DSGGF. The tract at residues 251-257 is RNA binding; sequence GVGAPDS. The active-site Nucleophile is aspartate 270. The tract at residues 275–279 is RNA binding; important for wobble base 34 recognition; it reads TRIAR. Zn(2+) is bound by residues cysteine 308, cysteine 310, cysteine 313, and histidine 339.

The protein belongs to the queuine tRNA-ribosyltransferase family. In terms of assembly, homodimer. Within each dimer, one monomer is responsible for RNA recognition and catalysis, while the other monomer binds to the replacement base PreQ1. It depends on Zn(2+) as a cofactor.

The enzyme catalyses 7-aminomethyl-7-carbaguanine + guanosine(34) in tRNA = 7-aminomethyl-7-carbaguanosine(34) in tRNA + guanine. The protein operates within tRNA modification; tRNA-queuosine biosynthesis. Functionally, catalyzes the base-exchange of a guanine (G) residue with the queuine precursor 7-aminomethyl-7-deazaguanine (PreQ1) at position 34 (anticodon wobble position) in tRNAs with GU(N) anticodons (tRNA-Asp, -Asn, -His and -Tyr). Catalysis occurs through a double-displacement mechanism. The nucleophile active site attacks the C1' of nucleotide 34 to detach the guanine base from the RNA, forming a covalent enzyme-RNA intermediate. The proton acceptor active site deprotonates the incoming PreQ1, allowing a nucleophilic attack on the C1' of the ribose to form the product. After dissociation, two additional enzymatic reactions on the tRNA convert PreQ1 to queuine (Q), resulting in the hypermodified nucleoside queuosine (7-(((4,5-cis-dihydroxy-2-cyclopenten-1-yl)amino)methyl)-7-deazaguanosine). This Streptococcus pneumoniae (strain Hungary19A-6) protein is Queuine tRNA-ribosyltransferase.